We begin with the raw amino-acid sequence, 422 residues long: Testin (422 aa).

One can recognise a PET domain in the interval 92-199 (MILTNPVPAK…GDVKLPSEMD (108 aa)). 2 disordered regions span residues 135–162 (QPVAGSEGAQYRKKQLAKQLPAHDQDPS) and 194–226 (LPSEMDVKPGDRSSLDGGDRGTTAEVGAVEDKS). Over residues 194 to 212 (LPSEMDVKPGDRSSLDGGD) the composition is skewed to basic and acidic residues. LIM zinc-binding domains follow at residues 234 to 297 (YSCY…CDSE), 299 to 359 (PRCA…NHAV), and 362 to 422 (QGCH…MMMS).

It belongs to the prickle / espinas / testin family. Interacts via LIM domain 1 with ZYX. Interacts (via LIM domain 3) with ENAH and VASP. Interacts with ALKBH4, talin, actin, alpha-actinin, GRIP1 and PXN. Interacts (via LIM domain 2) with ACTL7A (via N-terminus). Heterodimer with ACTL7A; the heterodimer interacts with ENAH to form a heterotrimer.

The protein resides in the cytoplasm. It is found in the cell junction. It localises to the focal adhesion. In terms of biological role, scaffold protein that may play a role in cell adhesion, cell spreading and in the reorganization of the actin cytoskeleton. Plays a role in the regulation of cell proliferation. May act as a tumor suppressor. The polypeptide is Testin (TES) (Monodelphis domestica (Gray short-tailed opossum)).